The chain runs to 283 residues: Lipoyl synthase (283 aa).

Residues Cys35, Cys40, Cys46, Cys61, Cys65, Cys68, and Ser273 each contribute to the [4Fe-4S] cluster site. Residues 47–262 form the Radical SAM core domain; that stretch reads FRSRQATFLI…RERALAMGFK (216 aa).

The protein belongs to the radical SAM superfamily. Lipoyl synthase family. [4Fe-4S] cluster serves as cofactor.

The protein resides in the cytoplasm. It carries out the reaction [[Fe-S] cluster scaffold protein carrying a second [4Fe-4S](2+) cluster] + N(6)-octanoyl-L-lysyl-[protein] + 2 oxidized [2Fe-2S]-[ferredoxin] + 2 S-adenosyl-L-methionine + 4 H(+) = [[Fe-S] cluster scaffold protein] + N(6)-[(R)-dihydrolipoyl]-L-lysyl-[protein] + 4 Fe(3+) + 2 hydrogen sulfide + 2 5'-deoxyadenosine + 2 L-methionine + 2 reduced [2Fe-2S]-[ferredoxin]. It participates in protein modification; protein lipoylation via endogenous pathway; protein N(6)-(lipoyl)lysine from octanoyl-[acyl-carrier-protein]: step 2/2. Functionally, catalyzes the radical-mediated insertion of two sulfur atoms into the C-6 and C-8 positions of the octanoyl moiety bound to the lipoyl domains of lipoate-dependent enzymes, thereby converting the octanoylated domains into lipoylated derivatives. The protein is Lipoyl synthase of Geotalea uraniireducens (strain Rf4) (Geobacter uraniireducens).